The primary structure comprises 345 residues: Beta-2-glycoprotein 1 (345 aa).

The first 19 residues, 1–19, serve as a signal peptide directing secretion; the sequence is MISLGLILFSSVLCHVATA. 4 Sushi domains span residues 21-81, 82-139, 140-202, and 203-262; these read RTCP…RCIP, RVCP…VCTR, VTCP…ECRE, and VKCP…SCKA. 11 disulfides stabilise this stretch: Cys23–Cys66, Cys51–Cys79, Cys84–Cys124, Cys110–Cys137, Cys142–Cys188, Cys174–Cys200, Cys205–Cys248, Cys234–Cys260, Cys264–Cys315, Cys300–Cys325, and Cys307–Cys345. O-linked (GalNAc...) threonine glycosylation is present at Thr33. N-linked (GlcNAc...) asparagine glycans are attached at residues Asn117, Asn162, Asn183, and Asn193. Asn253 is a glycosylation site (N-linked (GlcNAc...) asparagine). The sushi-like stretch occupies residues 263–345; that stretch reads SCKLSVKKAT…KTDASDVKPC (83 aa).

Expressed by the liver and secreted in plasma.

Its subcellular location is the secreted. Functionally, binds to various kinds of negatively charged substances such as heparin, phospholipids, and dextran sulfate. May prevent activation of the intrinsic blood coagulation cascade by binding to phospholipids on the surface of damaged cells. This is Beta-2-glycoprotein 1 (APOH) from Canis lupus familiaris (Dog).